The primary structure comprises 389 residues: Methane monooxygenase component A beta chain (389 aa).

In terms of assembly, m.capsulatus has two forms of methane monooxygenase, a soluble and a membrane-bound type. The soluble type consists of four components (A to D): protein A, comprising three chains, in an alpha-2, beta-2, gamma-2 configuration, is a nonheme iron protein containing an unusual mu-hydroxo bridge structure at its active site and interacts with both oxygen and methane.

It catalyses the reaction methane + NADH + O2 + H(+) = methanol + NAD(+) + H2O. It carries out the reaction methane + NADPH + O2 + H(+) = methanol + NADP(+) + H2O. Its function is as follows. Responsible for the initial oxygenation of methane to methanol in methanotrophs. It also catalyzes the monohydroxylation of a variety of unactivated alkenes, alicyclic, aromatic and heterocyclic compounds. The polypeptide is Methane monooxygenase component A beta chain (mmoY) (Methylococcus capsulatus (strain ATCC 33009 / NCIMB 11132 / Bath)).